A 400-amino-acid chain; its full sequence is Tryptophan synthase beta chain (400 aa).

The residue at position 91 (Lys-91) is an N6-(pyridoxal phosphate)lysine.

This sequence belongs to the TrpB family. In terms of assembly, tetramer of two alpha and two beta chains. It depends on pyridoxal 5'-phosphate as a cofactor.

The catalysed reaction is (1S,2R)-1-C-(indol-3-yl)glycerol 3-phosphate + L-serine = D-glyceraldehyde 3-phosphate + L-tryptophan + H2O. The protein operates within amino-acid biosynthesis; L-tryptophan biosynthesis; L-tryptophan from chorismate: step 5/5. The beta subunit is responsible for the synthesis of L-tryptophan from indole and L-serine. The polypeptide is Tryptophan synthase beta chain (Listeria monocytogenes serovar 1/2a (strain ATCC BAA-679 / EGD-e)).